Consider the following 607-residue polypeptide: Discoidin-inducing complex subunit B (607 aa).

The first 19 residues, 1–19, serve as a signal peptide directing secretion; the sequence is MNKKIIILIYLIFIKSIVG. The Extracellular portion of the chain corresponds to 20–554; the sequence is QNPVWIGGSG…LGTDGISKGS (535 aa). Residues Asn75, Asn161, Asn215, Asn276, Asn277, Asn307, Asn324, Asn453, Asn477, and Asn527 are each glycosylated (N-linked (GlcNAc...) asparagine). The chain crosses the membrane as a helical span at residues 555–575; that stretch reads LAGISVSMVALACFVSLGVWW. The Cytoplasmic segment spans residues 576–607; that stretch reads KTSKKNDQRNDSQVLTNFSQNKSDDIDVERKL.

In terms of assembly, forms a complex with psiF/dicA.

It localises to the membrane. The protein resides in the secreted. Its function is as follows. Component of a complex that acts as a quorum sensing protein regulating discoidin gene expression during growth and development. Its function in the complex is unclear as it has no ability to induce discoidin during growth and development by itself. This Dictyostelium discoideum (Social amoeba) protein is Discoidin-inducing complex subunit B (dicB).